Consider the following 227-residue polypeptide: uncharacterized protein (227 aa).

Residues Met1 to Ala25 form the signal peptide.

It to R.conorii RC1281.

This is an uncharacterized protein from Rickettsia conorii (strain ATCC VR-613 / Malish 7).